A 395-amino-acid polypeptide reads, in one-letter code: Putative 8-amino-7-oxononanoate synthase (395 aa).

Substrate is bound at residue Arg23. 110–111 (GY) contacts pyridoxal 5'-phosphate. Substrate is bound at residue His135. Residues Ser182, 207–210 (DEAH), and 239–242 (TFSK) each bind pyridoxal 5'-phosphate. An N6-(pyridoxal phosphate)lysine modification is found at Lys242. Position 356 (Thr356) interacts with substrate.

The protein belongs to the class-II pyridoxal-phosphate-dependent aminotransferase family. BioF subfamily. In terms of assembly, homodimer. Pyridoxal 5'-phosphate is required as a cofactor.

The catalysed reaction is 6-carboxyhexanoyl-[ACP] + L-alanine + H(+) = (8S)-8-amino-7-oxononanoate + holo-[ACP] + CO2. It functions in the pathway cofactor biosynthesis; biotin biosynthesis. In terms of biological role, catalyzes the decarboxylative condensation of pimeloyl-[acyl-carrier protein] and L-alanine to produce 8-amino-7-oxononanoate (AON), [acyl-carrier protein], and carbon dioxide. The polypeptide is Putative 8-amino-7-oxononanoate synthase (bioF) (Bacillus mycoides (strain KBAB4) (Bacillus weihenstephanensis)).